Reading from the N-terminus, the 98-residue chain is ATP synthase subunit alpha, chloroplastic (98 aa).

It belongs to the ATPase alpha/beta chains family. F-type ATPases have 2 components, CF(1) - the catalytic core - and CF(0) - the membrane proton channel. CF(1) has five subunits: alpha(3), beta(3), gamma(1), delta(1), epsilon(1). CF(0) has four main subunits: a, b, b' and c.

It is found in the plastid. It localises to the chloroplast thylakoid membrane. It carries out the reaction ATP + H2O + 4 H(+)(in) = ADP + phosphate + 5 H(+)(out). Functionally, produces ATP from ADP in the presence of a proton gradient across the membrane. The alpha chain is a regulatory subunit. In Populus euphratica (Euphrates poplar), this protein is ATP synthase subunit alpha, chloroplastic (atpA).